The following is a 195-amino-acid chain: Glycerol-3-phosphate acyltransferase 2 (195 aa).

The next 6 membrane-spanning stretches (helical) occupy residues Val-4–Val-24, Gly-52–Ala-72, Leu-73–Phe-93, Ala-115–Ile-135, Ala-150–Gly-170, and Gly-171–Ala-191.

It belongs to the PlsY family. As to quaternary structure, probably interacts with PlsX.

Its subcellular location is the cell membrane. The catalysed reaction is an acyl phosphate + sn-glycerol 3-phosphate = a 1-acyl-sn-glycero-3-phosphate + phosphate. Its pathway is lipid metabolism; phospholipid metabolism. In terms of biological role, catalyzes the transfer of an acyl group from acyl-phosphate (acyl-PO(4)) to glycerol-3-phosphate (G3P) to form lysophosphatidic acid (LPA). This enzyme utilizes acyl-phosphate as fatty acyl donor, but not acyl-CoA or acyl-ACP. This is Glycerol-3-phosphate acyltransferase 2 from Deinococcus radiodurans (strain ATCC 13939 / DSM 20539 / JCM 16871 / CCUG 27074 / LMG 4051 / NBRC 15346 / NCIMB 9279 / VKM B-1422 / R1).